Here is a 386-residue protein sequence, read N- to C-terminus: L-lactate dehydrogenase (386 aa).

The FMN hydroxy acid dehydrogenase domain maps to 1–380 (MIISAASDYR…SGDALSRVTR (380 aa)). Tyrosine 24 provides a ligand contact to substrate. Residues serine 106 and glutamine 127 each contribute to the FMN site. Tyrosine 129 contributes to the substrate binding site. Threonine 155 contributes to the FMN binding site. Arginine 164 is a binding site for substrate. Lysine 251 provides a ligand contact to FMN. Residue histidine 275 is the Proton acceptor of the active site. Arginine 278 is a substrate binding site. FMN is bound at residue 306 to 330 (DSGIRSGLDVVRMLALGADAVLLGR).

It belongs to the FMN-dependent alpha-hydroxy acid dehydrogenase family. FMN is required as a cofactor.

The protein resides in the cell inner membrane. The catalysed reaction is (S)-lactate + A = pyruvate + AH2. In terms of biological role, catalyzes the conversion of L-lactate to pyruvate. Is coupled to the respiratory chain. This chain is L-lactate dehydrogenase, found in Xanthomonas campestris pv. campestris (strain B100).